The following is a 149-amino-acid chain: uncharacterized protein (149 aa).

A helical transmembrane segment spans residues 124–144 (IIIIALIIILANYAPSIIGKI).

The protein belongs to the M.jannaschii MJ0023/MJ0349/MJ1072/MJ1074/MJ1107/MJECL16 family.

It is found in the membrane. This is an uncharacterized protein from Methanocaldococcus jannaschii (strain ATCC 43067 / DSM 2661 / JAL-1 / JCM 10045 / NBRC 100440) (Methanococcus jannaschii).